The primary structure comprises 485 residues: Bindin (485 aa).

An N-terminal signal peptide occupies residues 1–20 (MGFHQISVIIVVLALASARA). Residues 21–247 (ADEFPSHTDT…DSERGARKKR (227 aa)) constitute a propeptide that is removed on maturation. Disordered stretches follow at residues 157-195 (GETRKRRGADDNDGDDVSKRASPRKGDEPAGHKLKDLAP), 219-273 (ISGH…PAQQ), and 305-331 (GGGQFGAFSPGEAEADNADYDEYSDSL). The span at 172-192 (DVSKRASPRKGDEPAGHKLKD) shows a compositional bias: basic and acidic residues. The segment covering 250–264 (NQGNYPQAMNPQSRG) has biased composition (polar residues). The segment covering 317–331 (AEADNADYDEYSDSL) has biased composition (acidic residues). A fucose-binding domain region spans residues 371–379 (LRHLRHHSN). The segment at 459–485 (QQGMGGVPQRMGGQPQGNAYNQGYRQG) is disordered. Low complexity predominate over residues 465-475 (VPQRMGGQPQG). The segment covering 476–485 (NAYNQGYRQG) has biased composition (polar residues).

Belongs to the bindin family.

It is found in the cytoplasmic vesicle. The protein localises to the secretory vesicle. The protein resides in the acrosome lumen. In terms of biological role, species-specific sea urchin sperm protein required for adhesion of sperm to the egg surface during fertilization. Bindin coats the acrosomal process after it is externalized by the acrosome reaction. It binds to sulfated, fucose-containing polysaccharides on the vitelline layer receptor proteoglycans which cover the egg plasma membrane. The protein is Bindin of Mesocentrotus franciscanus (Giant red sea urchin).